We begin with the raw amino-acid sequence, 330 residues long: ATP-dependent Clp protease proteolytic subunit-related protein 3, chloroplastic (330 aa).

Residues Met1–Arg43 constitute a chloroplast transit peptide. Residues Ala7–Arg32 are disordered. A compositionally biased stretch (low complexity) spans Ser8–Ser30.

The protein belongs to the peptidase S14 family. In terms of assembly, component of the chloroplastic Clp protease core complex which consist of at least 16 proteins: CLPP4 (3 copies), CLPP5 (3 copies), CLPR4 (2 copies), ClpP1 (1 copy), CLPP6 (1 copy), CLPR2 (1 copy), CLPT1 (1 copy), CLPT2 (1 copy) and 3 copies of CLPP3 and/or CLPR1 and/or CLPR3. The core complex is organized in two heptameric rings, one containing CLPP3,4,5,6 in a 1:2:3:1 ratio and the other CLPP1 and CLPR1,2,3,4 in a 3:1:1:1:1 ratio.

It is found in the plastid. It localises to the chloroplast. The protein is ATP-dependent Clp protease proteolytic subunit-related protein 3, chloroplastic of Arabidopsis thaliana (Mouse-ear cress).